The sequence spans 556 residues: 2-succinyl-5-enolpyruvyl-6-hydroxy-3-cyclohexene-1-carboxylate synthase (556 aa).

Belongs to the TPP enzyme family. MenD subfamily. In terms of assembly, homodimer. It depends on Mg(2+) as a cofactor. Mn(2+) serves as cofactor. The cofactor is thiamine diphosphate.

The enzyme catalyses isochorismate + 2-oxoglutarate + H(+) = 5-enolpyruvoyl-6-hydroxy-2-succinyl-cyclohex-3-ene-1-carboxylate + CO2. Its pathway is quinol/quinone metabolism; 1,4-dihydroxy-2-naphthoate biosynthesis; 1,4-dihydroxy-2-naphthoate from chorismate: step 2/7. The protein operates within quinol/quinone metabolism; menaquinone biosynthesis. Catalyzes the thiamine diphosphate-dependent decarboxylation of 2-oxoglutarate and the subsequent addition of the resulting succinic semialdehyde-thiamine pyrophosphate anion to isochorismate to yield 2-succinyl-5-enolpyruvyl-6-hydroxy-3-cyclohexene-1-carboxylate (SEPHCHC). This is 2-succinyl-5-enolpyruvyl-6-hydroxy-3-cyclohexene-1-carboxylate synthase from Salmonella agona (strain SL483).